A 196-amino-acid polypeptide reads, in one-letter code: Ribosome maturation factor RimP (196 aa).

The tract at residues 164 to 196 (LAPQKPNKPGPKKPGHDKKKPSNEPAAGKPRAE) is disordered. Basic residues predominate over residues 173–182 (GPKKPGHDKK).

Belongs to the RimP family.

It is found in the cytoplasm. Required for maturation of 30S ribosomal subunits. The protein is Ribosome maturation factor RimP of Xanthomonas campestris pv. campestris (strain 8004).